Consider the following 477-residue polypeptide: Protein kinase C and casein kinase substrate in neurons protein 2 (477 aa).

Positions 11 to 282 (VEVSSDSFWE…AIKSADAMED (272 aa)) constitute an F-BAR domain. A coiled-coil region spans residues 25-274 (KRTVKRIDDG…SIYRELEYAI (250 aa)). Basic and acidic residues-rich tracts occupy residues 163-176 (CKEEKLATSRETNS) and 186-216 (QLKKLQDKVEKSKQDSQKTKEKYEKSLKDLD). Disordered regions lie at residues 163–218 (CKEE…LDGT) and 314–412 (RREK…PFDE). The span at 328 to 341 (GISQSGEQSSIQNQ) shows a compositional bias: low complexity. The segment covering 342–357 (HSSHLSVQSAQSTNNP) has biased composition (polar residues). The NPF1 signature appears at 356–358 (NPF). Basic and acidic residues predominate over residues 370–388 (TENKKIENVGSYEKTHPAE). Polar residues predominate over residues 395–407 (NNPFNPSDTNGDN). An NPF2 motif is present at residues 396–398 (NPF). An NPF3 motif is present at residues 408-410 (NPF). The SH3 domain maps to 417 to 477 (TLEVRVRALY…YPANYVESVQ (61 aa)).

This sequence belongs to the PACSIN family. Interacts with adam13 through the SH3 domains. In terms of processing, phosphorylated. In terms of tissue distribution, ubiquitously expressed with higher expression in the ectoderm, the neuroectoderm, and dorsal mesoderm layers.

The protein resides in the cytoplasm. It localises to the cytoskeleton. Its subcellular location is the cytoplasmic vesicle membrane. The protein localises to the cell projection. It is found in the ruffle membrane. The protein resides in the early endosome. It localises to the recycling endosome membrane. Its subcellular location is the cell membrane. The protein localises to the membrane. It is found in the caveola. The protein resides in the cell junction. It localises to the adherens junction. Its function is as follows. Regulates the morphogenesis and endocytosis of caveolae. Lipid-binding protein that is able to promote the tubulation of the phosphatidic acid-containing membranes it preferentially binds. Plays a role in intracellular vesicle-mediated transport. Involved in the endocytosis of cell-surface receptors like the EGF receptor, contributing to its internalization in the absence of EGF stimulus. This chain is Protein kinase C and casein kinase substrate in neurons protein 2 (pacsin2), found in Xenopus laevis (African clawed frog).